The following is a 329-amino-acid chain: D-alanine--D-alanine ligase (329 aa).

One can recognise an ATP-grasp domain in the interval 120 to 326 (KLWLSAIGIP…FAHYLEQILR (207 aa)). Residue 150-205 (ALAKWGKVFIKAASQGSSVGCYSASNETDLLQGIKDAFGYSEQVLIEKAVKPRELE) participates in ATP binding. Asp-280, Glu-293, and Asn-295 together coordinate Mg(2+).

Belongs to the D-alanine--D-alanine ligase family. Mg(2+) is required as a cofactor. Mn(2+) serves as cofactor.

The protein resides in the cytoplasm. It carries out the reaction 2 D-alanine + ATP = D-alanyl-D-alanine + ADP + phosphate + H(+). The protein operates within cell wall biogenesis; peptidoglycan biosynthesis. Its function is as follows. Cell wall formation. This Aeromonas salmonicida (strain A449) protein is D-alanine--D-alanine ligase.